Reading from the N-terminus, the 1254-residue chain is Structural polyprotein (1254 aa).

The interval 43 to 77 (LQAQQMQQLISAVSALTTKQNVKAPKGQRKQKQQK) is host transcription inhibition. Residues 60–112 (TKQNVKAPKGQRKQKQQKPKEKKEKQKKKPTXKKKQQQKPKPQAKKKKPGRRE) form a disordered region. The Nuclear localization signal motif lies at 70–108 (QRKQKQQKPKEKKEKQKKKPTXKKKQQQKPKPQAKKKKP). Positions 84–110 (KQKKKPTXKKKQQQKPKPQAKKKKPGR) are enriched in basic residues. The binding to the viral RNA stretch occupies residues 95-123 (QQQKPKPQAKKKKPGRRERMCMKIENDCI). Residues 108–122 (PGRRERMCMKIENDC) are ribosome-binding. Residues Cys-122 and Cys-137 are joined by a disulfide bond. One can recognise a Peptidase S3 domain in the interval 122-270 (CIFEVKLDGK…RVTPEGTEEW (149 aa)). His-148 functions as the Charge relay system in the catalytic mechanism. Positions 153–163 (IDNPDLAKLTY) match the Nuclear export signal motif. The interval 164–169 (KKSSKY) is interaction with spike glycoprotein E2. Residue Asp-170 is the Charge relay system of the active site. The segment at 192–202 (PEGHYNWHHGA) is dimerization of the capsid protein. Ser-222 serves as the catalytic Charge relay system. The tract at residues 228 to 232 (DNKGR) is dimerization of the capsid protein. The Extracellular segment spans residues 270 to 694 (WSAALMMCIL…PHEIIQYYYG (425 aa)). Residues 271-282 (SAALMMCILANT) form a functions as an uncleaved signal peptide for the precursor of protein E3/E2 region. Disulfide bonds link Cys-277-Cys-286, Cys-291-Cys-295, and Cys-294-Cys-326. The N-linked (GlcNAc...) asparagine; by host glycan is linked to Asn-281. N-linked (GlcNAc...) asparagine; by host glycosylation is present at Asn-328. Intrachain disulfides connect Cys-353–Cys-459, Cys-356–Cys-362, Cys-425–Cys-439, Cys-487–Cys-599, Cys-535–Cys-559, and Cys-537–Cys-554. Interaction with host Mxra8 receptor regions lie at residues 360–363 (YFCY) and 396–398 (HAH). The interval 518 to 521 (TAGN) is interaction with host Mxra8 receptor. Asn-534 carries an N-linked (GlcNAc...) asparagine; by host glycan. The interaction with host Mxra8 receptor stretch occupies residues 550–556 (TINTCKI). An N-linked (GlcNAc...) asparagine; by host glycan is attached at Asn-596. A helical transmembrane segment spans residues 695 to 715 (LYPAATIAAVSGASLMALLTL). Residues 716–756 (AATCCMLATARRKCLTPYALTPGAVVPLTLGLLXCAPRANA) lie on the Cytoplasmic side of the membrane. Cys-719 carries the S-palmitoyl cysteine; by host lipid modification. Positions 724-728 (TARRK) are interaction with the capsid protein. Residues Cys-729 and Cys-750 are each lipidated (S-palmitoyl cysteine; by host). The segment at 729-749 (CLTPYALTPGAVVPLTLGLLX) is transient transmembrane before p62-6K protein processing. An intrachain disulfide couples Cys-729 to Cys-750. Over 757–771 (ASFAETMAYLWDENK) the chain is Extracellular. The helical transmembrane segment at 772–792 (TLFWMEXXXXXXALALLACCI) threads the bilayer. Residue Lys-793 is a topological domain, cytoplasmic. A helical membrane pass occupies residues 794-814 (SLICCCKPFSFLVLLSLGASA). Over 815-1231 (KAYEHTATIP…AMTWVQRMAS (417 aa)) the chain is Extracellular. Cystine bridges form between Cys-865-Cys-930, Cys-878-Cys-910, Cys-879-Cys-912, and Cys-884-Cys-894. Positions 900–917 (VYPFMWGGAYCFCDSENT) are E1 fusion peptide loop. Asn-957 carries an N-linked (GlcNAc...) asparagine; by host glycan. 4 cysteine pairs are disulfide-bonded: Cys-1075-Cys-1087, Cys-1117-Cys-1192, Cys-1122-Cys-1196, and Cys-1144-Cys-1186. The helical transmembrane segment at 1232-1252 (GLGGLALIAVVVLVLVTCITM) threads the bilayer. Residue Cys-1249 is the site of S-palmitoyl cysteine; by host attachment. Residue Cys-1249 is the site of S-stearoyl cysteine; by host attachment. Residues 1253-1254 (RR) lie on the Cytoplasmic side of the membrane.

In terms of assembly, homodimer. Homomultimer. Interacts with host karyopherin KPNA4; this interaction allows the nuclear import of the viral capsid protein. Interacts with spike glycoprotein E2. Interacts with host IRAK1; the interaction leads to inhibition of IRAK1-dependent signaling. The precursor of protein E3/E2 and E1 form a heterodimer shortly after synthesis. As to quaternary structure, the precursor of protein E3/E2 and E1 form a heterodimer shortly after synthesis. Processing of the precursor of protein E3/E2 into E2 and E3 results in a heterodimer of the spike glycoproteins E2 and E1. Spike at virion surface are constituted of a trimer of E2-E1 heterodimers. After target cell attachment and endocytosis, E1 change conformation to form homotrimers. Interacts with 6K protein. In terms of assembly, interacts with spike glycoprotein E1. Processing of the precursor of protein E3/E2 into E2 and E3 results in a heterodimer of the spike glycoproteins E2 and E1. Spike at virion surface are constituted of a trimer of E2-E1 heterodimers. Interacts with 6K protein. Interacts with host MXRA8; this interaction mediates virus entry. Structural polyprotein: Specific enzymatic cleavages in vivo yield mature proteins. Capsid protein is auto-cleaved during polyprotein translation, unmasking a signal peptide at the N-terminus of the precursor of E3/E2. The remaining polyprotein is then targeted to the host endoplasmic reticulum, where host signal peptidase cleaves it into pE2, 6K and E1 proteins. pE2 is further processed to mature E3 and E2 by host furin in trans-Golgi vesicle. In terms of processing, palmitoylated via thioester bonds. These palmitoylations may induce disruption of the C-terminus transmembrane. This would result in the reorientation of E2 C-terminus from lumenal to cytoplasmic side. Post-translationally, N-glycosylated. Palmitoylated via thioester bonds.

It is found in the virion. It localises to the host cytoplasm. The protein resides in the host cell membrane. Its subcellular location is the host nucleus. The protein localises to the virion membrane. It is found in the host Golgi apparatus. It localises to the host trans-Golgi network. The protein resides in the host endoplasmic reticulum. It carries out the reaction Autocatalytic release of the core protein from the N-terminus of the togavirus structural polyprotein by hydrolysis of a -Trp-|-Ser- bond.. In terms of biological role, forms an icosahedral capsid with a T=4 symmetry composed of 240 copies of the capsid protein surrounded by a lipid membrane through which penetrate 80 spikes composed of trimers of E1-E2 heterodimers. The capsid protein binds to the viral RNA genome at a site adjacent to a ribosome binding site for viral genome translation following genome release. Possesses a protease activity that results in its autocatalytic cleavage from the nascent structural protein. Following its self-cleavage, the capsid protein transiently associates with ribosomes, and within several minutes the protein binds to viral RNA and rapidly assembles into icosahedric core particles. The resulting nucleocapsid eventually associates with the cytoplasmic domain of the spike glycoprotein E2 at the cell membrane, leading to budding and formation of mature virions. In case of infection, new virions attach to target cells and after clathrin-mediated endocytosis their membrane fuses with the host endosomal membrane. This leads to the release of the nucleocapsid into the cytoplasm, followed by an uncoating event necessary for the genomic RNA to become accessible. The uncoating might be triggered by the interaction of capsid proteins with ribosomes. Binding of ribosomes would release the genomic RNA since the same region is genomic RNA-binding and ribosome-binding. Specifically inhibits interleukin-1 receptor-associated kinase 1/IRAK1-dependent signaling during viral entry, representing a means by which the alphaviruses may evade innate immune detection and activation prior to viral gene expression. Functionally, provides the signal sequence for the translocation of the precursor of protein E3/E2 to the host endoplasmic reticulum. Furin-cleaved E3 remains associated with spike glycoprotein E1 and mediates pH protection of the latter during the transport via the secretory pathway. After virion release from the host cell, the assembly protein E3 is gradually released in the extracellular space. Its function is as follows. Plays a role in viral attachment to target host cell, by binding to the cell receptor MXRA8. The host LDLR may also act as a cell receptor for viral entry. Synthesized as a p62 precursor which is processed by furin at the cell membrane just before virion budding, giving rise to E2-E1 heterodimer. The p62-E1 heterodimer is stable, whereas E2-E1 is unstable and dissociate at low pH. p62 is processed at the last step, presumably to avoid E1 fusion activation before its final export to cell surface. E2 C-terminus contains a transitory transmembrane that would be disrupted by palmitoylation, resulting in reorientation of the C-terminal tail from lumenal to cytoplasmic side. This step is critical since E2 C-terminus is involved in budding by interacting with capsid proteins. This release of E2 C-terminus in cytoplasm occurs lately in protein export, and precludes premature assembly of particles at the endoplasmic reticulum membrane. Acts as a viroporin that participates in virus glycoprotein processing and transport to the plasma membrane, cell permeabilization and budding of viral particles. The cation channel is permeable to Na(+)&gt;K(+)&gt;Ca(2+) in vitro. Disrupts the calcium homeostasis of the cell, probably at the endoplasmic reticulum level. This leads to cytoplasmic calcium elevation. Because of its lipophilic properties, the 6K protein is postulated to influence the selection of lipids that interact with the transmembrane domains of the glycoproteins, which, in turn, affects the deformability of the bilayer required for the extreme curvature that occurs as budding proceeds. Present in low amount in virions, about 3% compared to viral glycoproteins. In terms of biological role, class II viral fusion protein. Fusion activity is inactive as long as E1 is bound to E2 in mature virion. After virus attachment to target cell via host MXRA8 and endocytosis, acidification of the endosome induce dissociation of E1/E2 heterodimer and concomitant trimerization of the E1 subunits. This E1 trimer is fusion active, and promotes release of viral nucleocapsid in cytoplasm after endosome and viral membrane fusion. Efficient fusion requires the presence of cholesterol and sphingolipid in the target membrane. The polypeptide is Structural polyprotein (Ross river virus (strain NB5092) (RRV)).